A 32-amino-acid chain; its full sequence is MSDIN-like toxin proprotein 3 (32 aa).

A propeptide spanning residues Met-1–Pro-10 is cleaved from the precursor. A cross-link (cyclopeptide (Val-Pro)) is located at residues Val-11 to Pro-17. A propeptide spanning residues Cys-18–Gly-32 is cleaved from the precursor.

The protein belongs to the MSDIN fungal toxin family. Processed by the macrocyclase-peptidase enzyme POPB to yield a toxic cyclic heptapeptide. POPB first removes 10 residues from the N-terminus. Conformational trapping of the remaining peptide forces the enzyme to release this intermediate rather than proceed to macrocyclization. The enzyme rebinds the remaining peptide in a different conformation and catalyzes macrocyclization of the N-terminal 7 residues.

Probable toxin that belongs to the MSDIN-like toxin family responsible for a large number of food poisoning cases and deaths. The sequence is that of MSDIN-like toxin proprotein 3 from Amanita fuligineoides.